The following is a 163-amino-acid chain: NADH-quinone oxidoreductase subunit I (163 aa).

4Fe-4S ferredoxin-type domains follow at residues 54 to 84 (LRRYPNGEERCIACKLCEAVCPALAITIDSH) and 94 to 123 (TRYDIDMFKCIYCGFCEESCPVDSIVLTRL). The [4Fe-4S] cluster site is built by Cys-64, Cys-67, Cys-70, Cys-74, Cys-103, Cys-106, Cys-109, and Cys-113.

This sequence belongs to the complex I 23 kDa subunit family. As to quaternary structure, NDH-1 is composed of 14 different subunits. Subunits NuoA, H, J, K, L, M, N constitute the membrane sector of the complex. The cofactor is [4Fe-4S] cluster.

It is found in the cell inner membrane. It carries out the reaction a quinone + NADH + 5 H(+)(in) = a quinol + NAD(+) + 4 H(+)(out). Functionally, NDH-1 shuttles electrons from NADH, via FMN and iron-sulfur (Fe-S) centers, to quinones in the respiratory chain. The immediate electron acceptor for the enzyme in this species is believed to be ubiquinone. Couples the redox reaction to proton translocation (for every two electrons transferred, four hydrogen ions are translocated across the cytoplasmic membrane), and thus conserves the redox energy in a proton gradient. The chain is NADH-quinone oxidoreductase subunit I from Halorhodospira halophila (strain DSM 244 / SL1) (Ectothiorhodospira halophila (strain DSM 244 / SL1)).